The chain runs to 323 residues: SURF1-like protein (323 aa).

Residues 57-71 are compositionally biased toward basic and acidic residues; it reads DAPKSRENREKDGGK. The segment at 57–76 is disordered; sequence DAPKSRENREKDGGKSKKSK. The next 2 membrane-spanning stretches (helical) occupy residues 81–101 and 299–319; these read WSTG…LGIW and HLNY…MWIH.

It belongs to the SURF1 family.

It localises to the mitochondrion inner membrane. In terms of biological role, probably involved in the biogenesis of the COX complex. This Caenorhabditis elegans protein is SURF1-like protein (sft-1).